A 100-amino-acid chain; its full sequence is Urease subunit gamma (100 aa).

This sequence belongs to the urease gamma subunit family. As to quaternary structure, heterotrimer of UreA (gamma), UreB (beta) and UreC (alpha) subunits. Three heterotrimers associate to form the active enzyme.

It is found in the cytoplasm. The catalysed reaction is urea + 2 H2O + H(+) = hydrogencarbonate + 2 NH4(+). It participates in nitrogen metabolism; urea degradation; CO(2) and NH(3) from urea (urease route): step 1/1. This is Urease subunit gamma from Escherichia coli O157:H7 (strain EC4115 / EHEC).